Here is a 510-residue protein sequence, read N- to C-terminus: E3 ubiquitin-protein ligase TRIM7 (510 aa).

The segment at 29–81 adopts an RING-type zinc-finger fold; sequence CSICLEFFREPVSVECGHSFCRACIMRCWERPGAGTGTATRTLPCPLPCPQCR. Residue Ser106 is modified to Phosphoserine; by RPS6KA5. The B box-type zinc finger occupies 124–165; it reads AAAARCSQHGEQLKLYCQDDGRAICVVCDRAREHRSHAVLPL. Residues Cys129, His132, Cys151, and His157 each coordinate Zn(2+). A coiled-coil region spans residues 165–275; sequence LEEAVQEAKE…SGQIQETAQK (111 aa). The 188-residue stretch at 323–510 folds into the B30.2/SPRY domain; the sequence is LLKKFKEDLQ…STGTYLRIWP (188 aa).

This sequence belongs to the TRIM/RBCC family. In terms of assembly, forms homodimers. Interacts with GNIP2. Interacts with GYG1. Interacts with RNF187 (via C-terminus). Phosphorylated at Ser-106 by RPS6KA5/MSK1, which stimulates the ubiquitin ligase activity. Post-translationally, auto-ubiquitinates via 'Lys-63'-linked polyubiquitination. Highly expressed in antigen-presenting cells.

The protein resides in the nucleus. The protein localises to the cytoplasm. Its subcellular location is the golgi apparatus. It carries out the reaction S-ubiquitinyl-[E2 ubiquitin-conjugating enzyme]-L-cysteine + [acceptor protein]-L-lysine = [E2 ubiquitin-conjugating enzyme]-L-cysteine + N(6)-ubiquitinyl-[acceptor protein]-L-lysine.. It participates in protein modification; protein ubiquitination. Its function is as follows. E3 ubiquitin-protein ligase that have both tumor-promoting and tumor-suppressing activities and functions in several biological processes including innate immunity, regulation of ferroptosis as well as cell proliferation and migration. Acts as an antiviral effector against multiple viruses by targeting specific viral proteins for ubiquitination and degradation including norovirus NTPase protein. Mechanistically, recognizes the C-terminal glutamine-containing motif generated by viral proteases that process the polyproteins and trigger their ubiquitination and subsequent degradation. Mediates 'Lys-63'-linked polyubiquitination and stabilization of the JUN coactivator RNF187 in response to growth factor signaling via the MEK/ERK pathway, thereby regulating JUN transactivation and cellular proliferation. Promotes the TLR4-mediated signaling activation through its E3 ligase domain leading to production of pro-inflammatory cytokines and type I interferon. Also plays a negative role in the regulation of exogenous cytosolic DNA virus-triggered immune response. Mechanistically, enhances the 'Lys-48'-linked ubiquitination of STING1 leading to its proteasome-dependent degradation. Mediates the ubiquitination of the SIN3-HDAC chromatin remodeling complex component BRMS1. Modulates NCOA4-mediated ferritinophagy and ferroptosis in glioblastoma cells by ubiquitinating NCOA4, leading to its degradation. In Mus musculus (Mouse), this protein is E3 ubiquitin-protein ligase TRIM7 (Trim7).